Here is a 208-residue protein sequence, read N- to C-terminus: Thymidylate kinase (208 aa).

13–20 provides a ligand contact to ATP; sequence GLEGAGKS.

The protein belongs to the thymidylate kinase family.

The catalysed reaction is dTMP + ATP = dTDP + ADP. Phosphorylation of dTMP to form dTDP in both de novo and salvage pathways of dTTP synthesis. The chain is Thymidylate kinase from Shewanella amazonensis (strain ATCC BAA-1098 / SB2B).